A 397-amino-acid polypeptide reads, in one-letter code: MTVIGTPFTDNATRVMLLGSGELGREVALELIRYGCEVIAVDRYAHAPAMQVAQHSHVINMLDGTALRAVVEQVKPALIVPEIEAIATDELVKLEAEGYTVVPTARAAQLTMNREGIRCLAAEELSLPTSPYRFADSLAGYQQAVREIGFPCVVKPVMSSSGKGQSTLKNEADILPAWEYAQSGGRAGKGRVIVEGFVDFDYEITLLTVRHKAGSEIKTSYCAPIGHRQENGDYQESWQPQPMSAAALQASREVALAITDALGGLGIFGVELFIKGDQVYFSEVSPRPHDTGLVTLISQTLSEFALHARAILGLPIPTIEQRGASASSVLLIQGQSEAMRYHGLNTALANADTEVRLFGKPDINGSRRLGVALAKADTIDAARDKANTAIAAFKVDL.

Residues 22-23 (EL) and Glu-82 contribute to the N(1)-(5-phospho-beta-D-ribosyl)glycinamide site. ATP contacts are provided by residues Arg-114, Lys-155, 160-165 (SSGKGQ), 195-198 (EGFV), and Glu-203. The ATP-grasp domain maps to 119-312 (CLAAEELSLP…EFALHARAIL (194 aa)). The Mg(2+) site is built by Glu-271 and Glu-283. Residues Asp-290, Lys-360, and 367–368 (RR) contribute to the N(1)-(5-phospho-beta-D-ribosyl)glycinamide site.

Belongs to the PurK/PurT family. As to quaternary structure, homodimer.

It carries out the reaction N(1)-(5-phospho-beta-D-ribosyl)glycinamide + formate + ATP = N(2)-formyl-N(1)-(5-phospho-beta-D-ribosyl)glycinamide + ADP + phosphate + H(+). It functions in the pathway purine metabolism; IMP biosynthesis via de novo pathway; N(2)-formyl-N(1)-(5-phospho-D-ribosyl)glycinamide from N(1)-(5-phospho-D-ribosyl)glycinamide (formate route): step 1/1. In terms of biological role, involved in the de novo purine biosynthesis. Catalyzes the transfer of formate to 5-phospho-ribosyl-glycinamide (GAR), producing 5-phospho-ribosyl-N-formylglycinamide (FGAR). Formate is provided by PurU via hydrolysis of 10-formyl-tetrahydrofolate. The protein is Formate-dependent phosphoribosylglycinamide formyltransferase of Alcanivorax borkumensis (strain ATCC 700651 / DSM 11573 / NCIMB 13689 / SK2).